We begin with the raw amino-acid sequence, 380 residues long: MALNLRKNHPILKIINDSLVDLPTPSNISAWWNFGSLLGICLMTQIITGLLLAMHYTADTTLAFSSVAHMCRNVQFGWLIRNLHANGASFFFICIYLHIGRGFYYGSYLNKETWNIGVILPPTLMATAFVGYVLPWGQMSFWGATVITNLFSAIPYIGQTLVEWAWGGFSVDNPTLTRFFALHFLLLFVTVGLTLVHLTFLHETGSNNPLGIPSDCDKIPFHPYYSIKDMLGFALMLILLATMALFSPNLLGDPENFTPANPLVTPPHIKPEWYFLFAYAILRSIPNKLGGVLALAASVLVLFLVPLLHKSKQRSMTFRPLLPFLFWTLVANLLILTWVGSQPVEHPFIIIGQVASFTYFTXILVLFPIASVLENKMLNL.

Transmembrane regions (helical) follow at residues 34–54, 78–99, 114–134, and 179–199; these read FGSLLGICLMTQIITGLLLAM, WLIRNLHANGASFFFICIYLHI, WNIGVILPPTLMATAFVGYVL, and FFALHFLLLFVTVGLTLVHLT. Positions 84 and 98 each coordinate heme b. Histidine 183 and histidine 197 together coordinate heme b. Residue histidine 202 participates in a ubiquinone binding. Helical transmembrane passes span 227–247, 289–309, 321–341, and 348–368; these read IKDMLGFALMLILLATMALFS, LGGVLALAASVLVLFLVPLLH, LLPFLFWTLVANLLILTWVGS, and FIIIGQVASFTYFTXILVLFP.

It belongs to the cytochrome b family. In terms of assembly, the cytochrome bc1 complex contains 11 subunits: 3 respiratory subunits (MT-CYB, CYC1 and UQCRFS1), 2 core proteins (UQCRC1 and UQCRC2) and 6 low-molecular weight proteins (UQCRH/QCR6, UQCRB/QCR7, UQCRQ/QCR8, UQCR10/QCR9, UQCR11/QCR10 and a cleavage product of UQCRFS1). This cytochrome bc1 complex then forms a dimer. Heme b is required as a cofactor.

It localises to the mitochondrion inner membrane. In terms of biological role, component of the ubiquinol-cytochrome c reductase complex (complex III or cytochrome b-c1 complex) that is part of the mitochondrial respiratory chain. The b-c1 complex mediates electron transfer from ubiquinol to cytochrome c. Contributes to the generation of a proton gradient across the mitochondrial membrane that is then used for ATP synthesis. This Gymnorhina tibicen (Australian magpie) protein is Cytochrome b (MT-CYB).